Reading from the N-terminus, the 158-residue chain is Disease resistance response protein DRRG49-C (158 aa).

Belongs to the BetVI family.

This chain is Disease resistance response protein DRRG49-C, found in Pisum sativum (Garden pea).